We begin with the raw amino-acid sequence, 597 residues long: Aspartate--tRNA(Asp/Asn) ligase (597 aa).

An L-aspartate-binding site is contributed by Glu172. The interval 196 to 199 is aspartate; sequence QLFK. Arg218 provides a ligand contact to L-aspartate. ATP is bound by residues 218–220 and Gln227; that span reads RDE. His454 contacts L-aspartate. Position 488 (Glu488) interacts with ATP. Arg495 provides a ligand contact to L-aspartate. An ATP-binding site is contributed by 540–543; it reads GLDR.

Belongs to the class-II aminoacyl-tRNA synthetase family. Type 1 subfamily. Homodimer.

It localises to the cytoplasm. It catalyses the reaction tRNA(Asx) + L-aspartate + ATP = L-aspartyl-tRNA(Asx) + AMP + diphosphate. In terms of biological role, aspartyl-tRNA synthetase with relaxed tRNA specificity since it is able to aspartylate not only its cognate tRNA(Asp) but also tRNA(Asn). Reaction proceeds in two steps: L-aspartate is first activated by ATP to form Asp-AMP and then transferred to the acceptor end of tRNA(Asp/Asn). The chain is Aspartate--tRNA(Asp/Asn) ligase from Chromobacterium violaceum (strain ATCC 12472 / DSM 30191 / JCM 1249 / CCUG 213 / NBRC 12614 / NCIMB 9131 / NCTC 9757 / MK).